A 490-amino-acid chain; its full sequence is Betaine aldehyde dehydrogenase (490 aa).

K(+) contacts are provided by I27 and D93. An NAD(+)-binding site is contributed by 150 to 152 (GAW). The Charge relay system role is filled by K162. NAD(+) is bound at residue 176–179 (KPSE). Position 180 (V180) interacts with K(+). Residue 230 to 233 (GTTT) coordinates NAD(+). Residue L246 coordinates K(+). Catalysis depends on E252, which acts as the Proton acceptor. The NAD(+) site is built by G254, C286, and E387. Residue C286 is the Nucleophile of the active site. C286 is subject to Cysteine sulfenic acid (-SOH). The K(+) site is built by K457 and G460. Catalysis depends on E464, which acts as the Charge relay system.

This sequence belongs to the aldehyde dehydrogenase family. As to quaternary structure, dimer of dimers. The cofactor is K(+).

The enzyme catalyses betaine aldehyde + NAD(+) + H2O = glycine betaine + NADH + 2 H(+). It functions in the pathway amine and polyamine biosynthesis; betaine biosynthesis via choline pathway; betaine from betaine aldehyde: step 1/1. Functionally, involved in the biosynthesis of the osmoprotectant glycine betaine. Catalyzes the irreversible oxidation of betaine aldehyde to the corresponding acid. The protein is Betaine aldehyde dehydrogenase of Pseudomonas putida (strain W619).